The following is a 917-amino-acid chain: MGHDLADIKKSFEASLPGYVEKKDPKSILPQPGKRNILITAALPYVNNVPHLGNIIGCVLSADVFARYCNLRGHQTFYVGGTDEYGTATETKALQEGCTPRELCDKYHAIHKGIYEWFGIDFSHFGRTTTDHQTEICQDMFLKLHKNGYTSSQSVDQLYCNQCEKFLADRFVTGTCPMCAYDDARGDQCDGCGKLINAVDLKDAKCHMCKATPEVKQSTHIFLSLDKLQQKTTEHLDRELAKEDNRWSSNAVGITKAWMKLGLDPRCITRDLKWGTAVPLDGFEKKVFYVWFDAPIGYLSITKCVLGDNWTKWWKNPENVELFNFVGKDNVAFHAVMFPCSQLGANDNYTVVNNLCATEYLNYEDTKFSKSRGTGIFGDAAQGTEIPADIWRFYLLYMRPESQDTAFSWDDFVLKVNSELLNNLGNFINRALSFVANSFGGVVPEMNLTNDDAEVLSEIHNECMQWDKQFDGVHLKDAVKTILNVSRLGNQYMQAQTPWVLMKKDEEGKKRAGTIIGVAANIAYHVSVLLYPIMPTISATIREQCGLPALPLFTPFPICYLKAGHKIGQPSPLFQKLDPAQIAEFKAKFGGSQDAQSSAPKTAEKPKQQKKQAPTKDKKGDKKMASTAAFVELEQGAKVISQLIAQNLKKFDQAKALFTRNQLQRLDGENKQLTIDVKTLQHQLIELETAAGIKQVPKPVVSCTPTPTSTPASGIITEAPKKEAPSTPAPSEPKKAKEQKKGKGGAAAAPVDDTIDVGRLDMRVGRIIKCEKHPDADALYVEQIDVGESAPRTVVSGLVRHVPLDQMQNRLVVVLCNLKPAKMRGVESRAMVMCASSPDKVEIMEVPADSKPGTPVVCPPYTHRPDEQLNPKKKIWETVAEDLKVSAEGFAEWKGQPLLIGSESKMTAPTLRGVHVK.

The 'HIGH' region signature appears at 44–54; that stretch reads PYVNNVPHLGN. A 'KMSKS' region motif is present at residues 367–371; the sequence is KFSKS. Lysine 370 is an ATP binding site. Disordered regions lie at residues 591–623 and 702–749; these read GSQD…GDKK and SCTP…AAAA. Over residues 614–623 the composition is skewed to basic and acidic residues; sequence PTKDKKGDKK. Positions 702 to 713 are enriched in low complexity; it reads SCTPTPTSTPAS. The span at 732 to 741 shows a compositional bias: basic and acidic residues; sequence EPKKAKEQKK. Positions 756–857 constitute a tRNA-binding domain; that stretch reads DVGRLDMRVG…ADSKPGTPVV (102 aa).

It belongs to the class-I aminoacyl-tRNA synthetase family.

The protein localises to the cytoplasm. The enzyme catalyses tRNA(Met) + L-methionine + ATP = L-methionyl-tRNA(Met) + AMP + diphosphate. This Caenorhabditis elegans protein is Methionine--tRNA ligase, cytoplasmic.